We begin with the raw amino-acid sequence, 430 residues long: Enolase (430 aa).

Gln-163 serves as a coordination point for (2R)-2-phosphoglycerate. Catalysis depends on Glu-205, which acts as the Proton donor. Mg(2+) is bound by residues Asp-242, Glu-288, and Asp-315. Residues Lys-340, Arg-369, Ser-370, and Lys-391 each coordinate (2R)-2-phosphoglycerate. Lys-340 serves as the catalytic Proton acceptor.

This sequence belongs to the enolase family. Mg(2+) serves as cofactor.

Its subcellular location is the cytoplasm. The protein localises to the secreted. It is found in the cell surface. The enzyme catalyses (2R)-2-phosphoglycerate = phosphoenolpyruvate + H2O. The protein operates within carbohydrate degradation; glycolysis; pyruvate from D-glyceraldehyde 3-phosphate: step 4/5. Catalyzes the reversible conversion of 2-phosphoglycerate (2-PG) into phosphoenolpyruvate (PEP). It is essential for the degradation of carbohydrates via glycolysis. In Onion yellows phytoplasma (strain OY-M), this protein is Enolase.